Consider the following 185-residue polypeptide: Acireductone dioxygenase (185 aa).

Fe(2+) contacts are provided by H97, H99, E103, and H141. Residues H97, H99, E103, and H141 each coordinate Ni(2+).

The protein belongs to the acireductone dioxygenase (ARD) family. As to quaternary structure, monomer. Requires Fe(2+) as cofactor. Ni(2+) is required as a cofactor.

The enzyme catalyses 1,2-dihydroxy-5-(methylsulfanyl)pent-1-en-3-one + O2 = 3-(methylsulfanyl)propanoate + CO + formate + 2 H(+). It carries out the reaction 1,2-dihydroxy-5-(methylsulfanyl)pent-1-en-3-one + O2 = 4-methylsulfanyl-2-oxobutanoate + formate + 2 H(+). It participates in amino-acid biosynthesis; L-methionine biosynthesis via salvage pathway; L-methionine from S-methyl-5-thio-alpha-D-ribose 1-phosphate: step 5/6. Functionally, catalyzes 2 different reactions between oxygen and the acireductone 1,2-dihydroxy-3-keto-5-methylthiopentene (DHK-MTPene) depending upon the metal bound in the active site. Fe-containing acireductone dioxygenase (Fe-ARD) produces formate and 2-keto-4-methylthiobutyrate (KMTB), the alpha-ketoacid precursor of methionine in the methionine recycle pathway. Ni-containing acireductone dioxygenase (Ni-ARD) produces methylthiopropionate, carbon monoxide and formate, and does not lie on the methionine recycle pathway. This chain is Acireductone dioxygenase, found in Stenotrophomonas maltophilia (strain R551-3).